The primary structure comprises 213 residues: ATP phosphoribosyltransferase (213 aa).

Belongs to the ATP phosphoribosyltransferase family. Short subfamily. In terms of assembly, heteromultimer composed of HisG and HisZ subunits.

Its subcellular location is the cytoplasm. The enzyme catalyses 1-(5-phospho-beta-D-ribosyl)-ATP + diphosphate = 5-phospho-alpha-D-ribose 1-diphosphate + ATP. It participates in amino-acid biosynthesis; L-histidine biosynthesis; L-histidine from 5-phospho-alpha-D-ribose 1-diphosphate: step 1/9. Catalyzes the condensation of ATP and 5-phosphoribose 1-diphosphate to form N'-(5'-phosphoribosyl)-ATP (PR-ATP). Has a crucial role in the pathway because the rate of histidine biosynthesis seems to be controlled primarily by regulation of HisG enzymatic activity. This is ATP phosphoribosyltransferase from Listeria welshimeri serovar 6b (strain ATCC 35897 / DSM 20650 / CCUG 15529 / CIP 8149 / NCTC 11857 / SLCC 5334 / V8).